A 321-amino-acid polypeptide reads, in one-letter code: Thioredoxin reductase tcpT (321 aa).

Residues 14-17 (GGPA), 36-41 (DSGRYR), His-49, and Ala-114 each bind FAD. Cysteines 138 and 141 form a disulfide. Residues Asp-282 and 289–290 (NV) each bind FAD.

Belongs to the class-II pyridine nucleotide-disulfide oxidoreductase family. Homodimer. It depends on FAD as a cofactor.

The protein operates within secondary metabolite biosynthesis. Thioredoxin reductase; part of the gene cluster that mediates the biosynthesis of an unusual class of epipolythiodioxopiperazines (ETPs) lacking the reactive thiol group important for toxicity. Firstly, L-tyrosine is prenylated by tcpD, before undergoing condensation with L-glycine in a reaction catalyzed by the NRPS tcpP leading to the diketopiperazine (DKP) backbone. Afterwards the alpha-carbon of tyrosine is oxidized by the cytochrome P450 tcpC to form a hydroxyl group. However, in contrast other ETP biosynthesis pathways studied so far, tcpC is not able to bishydroxylate the DKP at both alpha-carbon positions, but hydroxylates the alpha-carbon of the tyrosine part and the nitrogen of the glycine part. The next steps involve an alpha,beta-elimination reaction catalyzed by tcpI, a methylation by the methyltransferase tcpN the action of the four enzyme cascade tcpG/K/J/I. Due to a dysfunctional cytochrome P450 monooxygenase tcpC, the pathway leads to the biosynthesis of probable non-toxic metabolites lacking the reactive thiol group. This Claviceps purpurea (strain 20.1) (Ergot fungus) protein is Thioredoxin reductase tcpT.